The primary structure comprises 431 residues: Histidine--tRNA ligase (431 aa).

It belongs to the class-II aminoacyl-tRNA synthetase family. As to quaternary structure, homodimer.

The protein resides in the cytoplasm. The enzyme catalyses tRNA(His) + L-histidine + ATP = L-histidyl-tRNA(His) + AMP + diphosphate + H(+). This Limosilactobacillus fermentum (strain NBRC 3956 / LMG 18251) (Lactobacillus fermentum) protein is Histidine--tRNA ligase.